The following is a 196-amino-acid chain: dCTP deaminase, dUMP-forming (196 aa).

Residues 101–106, Asp-119, 127–129, Gln-148, Tyr-162, and Gln-174 contribute to the dCTP site; these read KSSLGR and TLE. Catalysis depends on Glu-129, which acts as the Proton donor/acceptor.

The protein belongs to the dCTP deaminase family. As to quaternary structure, homotrimer.

It catalyses the reaction dCTP + 2 H2O = dUMP + NH4(+) + diphosphate. It functions in the pathway pyrimidine metabolism; dUMP biosynthesis; dUMP from dCTP: step 1/1. Functionally, bifunctional enzyme that catalyzes both the deamination of dCTP to dUTP and the hydrolysis of dUTP to dUMP without releasing the toxic dUTP intermediate. The sequence is that of dCTP deaminase, dUMP-forming from Tropheryma whipplei (strain TW08/27) (Whipple's bacillus).